Consider the following 284-residue polypeptide: Phosphate import ATP-binding protein PstB 2 (284 aa).

Residues 1 to 22 (MTLLSTLRGISSPARQQPGTQS) are compositionally biased toward polar residues. Residues 1–29 (MTLLSTLRGISSPARQQPGTQSESRRGGD) form a disordered region. Residues 36–278 (LAVAGVSHGF…PDDARARKFI (243 aa)) form the ABC transporter domain. 68–75 (GPSGTGKT) lines the ATP pocket.

This sequence belongs to the ABC transporter superfamily. Phosphate importer (TC 3.A.1.7) family. As to quaternary structure, the complex is composed of two ATP-binding proteins (PstB), two transmembrane proteins (PstC and PstA) and a solute-binding protein (PstS).

The protein resides in the cell membrane. It catalyses the reaction phosphate(out) + ATP + H2O = ADP + 2 phosphate(in) + H(+). Its function is as follows. Part of the ABC transporter complex PstSACB involved in phosphate import. Responsible for energy coupling to the transport system. This chain is Phosphate import ATP-binding protein PstB 2, found in Natronomonas pharaonis (strain ATCC 35678 / DSM 2160 / CIP 103997 / JCM 8858 / NBRC 14720 / NCIMB 2260 / Gabara) (Halobacterium pharaonis).